A 3470-amino-acid polypeptide reads, in one-letter code: Dynein axonemal heavy chain 5 (3470 aa).

Positions 1 to 1938 (MFRIGRRQLW…MIHITDVAFT (1938 aa)) are stem. Residues 899-918 (EKVRHENASPNGDTSGGGEG) are disordered. 4 AAA regions span residues 1939 to 2161 (YQNE…VLRT), 2221 to 2440 (TAIS…IQNL), 2547 to 2800 (VYPP…IWQG), and 2913 to 3167 (LYNE…FRRS). Residues 1977-1984 (GPAGTGKT) and 2259-2266 (GPSGSGKT) each bind ATP. Coiled coils occupy residues 3207-3241 (LKEA…VLKE) and 3434-3468 (HALA…AMTE).

Belongs to the dynein heavy chain family. Interacts with DNAL1. Consists of at least two heavy chains and a number of intermediate and light chains.

It localises to the cytoplasm. The protein localises to the cytoskeleton. Its subcellular location is the cilium axoneme. Functionally, force generating protein of respiratory cilia. Produces force towards the minus ends of microtubules. Dynein has ATPase activity; the force-producing power stroke is thought to occur on release of ADP. Required for structural and functional integrity of the cilia of ependymal cells lining the brain ventricles. The protein is Dynein axonemal heavy chain 5 of Rattus norvegicus (Rat).